Here is a 551-residue protein sequence, read N- to C-terminus: Thermolysin (551 aa).

Positions 1 to 31 (MKRKMKMKLVRFGLAAGLAAQVFFLPYNALA) are cleaved as a signal peptide. Positions 32–235 (STEHVTWNQQ…DAAKPGDVKS (204 aa)) are cleaved as a propeptide — activation peptide. Residues Asp292, Asp294, Gln296, and Asp373 each contribute to the Ca(2+) site. His377 is a Zn(2+) binding site. Residue Glu378 is part of the active site. Zn(2+)-binding residues include His381 and Glu401. Ca(2+) is bound by residues Glu412, Asn418, Asp420, Glu422, Glu425, Thr429, Ile432, and Asp435. The Proton donor role is filled by His466.

This sequence belongs to the peptidase M4 family. Ca(2+) serves as cofactor. Zn(2+) is required as a cofactor.

It localises to the secreted. The enzyme catalyses Preferential cleavage: Xaa-|-Leu &gt; Xaa-|-Phe.. Extracellular zinc metalloprotease. The chain is Thermolysin (nprS) from Geobacillus stearothermophilus (Bacillus stearothermophilus).